The following is a 315-amino-acid chain: MACFRVILYLSVIFFVQCVFAAPKGITKVAPENHNFFGRITSYAHPKDVPDPVPMYQQFAALAQQSNCHNYHINISVGDATLLYSWGDNDRNQRLQLFHSKSLGIVASWAGMNPTKINSILGAADVFLVDVDRRYFPHAEKGAKLYKGFQDAYKRVAPTFIKELQYYQELYNEDRVSLTGLSYGAALANIALLHVKKNLKRGSIYRTVAFGLPRVGNQEWANSIDKHADGKFFYVANGNDLVVRAPPRELGYQHPSGQIWINPSNSSNWKFYPGQENVHGANSEFGYSIPDHTGVYFRTEIASLWGHCPATVGKD.

The N-terminal stretch at 1-21 (MACFRVILYLSVIFFVQCVFA) is a signal peptide. A disulfide bond links C68 and C308. N74 carries N-linked (GlcNAc...) asparagine glycosylation. S182 functions as the Nucleophile in the catalytic mechanism. The active site involves D240. Residue N265 is glycosylated (N-linked (GlcNAc...) asparagine). H292 is an active-site residue.

This sequence belongs to the AB hydrolase superfamily. Lipase family. Class 3 subfamily.

It localises to the secreted. It catalyses the reaction a monoacylglycerol + H2O = glycerol + a fatty acid + H(+). The catalysed reaction is a diacylglycerol + H2O = a monoacylglycerol + a fatty acid + H(+). Its function is as follows. Secreted lipase involved in Dandruff and seborrheic dermatitis (D/SD) probably via lipase-mediated breakdown of sebaceous lipids and release of irritating free fatty acids. Shows activity against monoglyceride and diglyceride substrates and generates free oleic acid from the substrates mono- and diolein. Able to cleave the oleic acid from both the 1 and the 2 position of the glycerol backbone as 1,2 isomers of diolein were converted into oleic acid and glycerol. Due to an absence of fatty acid synthase genes in Malassezia species, secretory lipases are essential for the yeast to generate free fatty acids from degradation of sebum and assimilate them as lipid sources for growth. Plays an essential role at the pathogen-host interface during disease progression. Also performs the reverse reaction to build diacylglycerols from monoacylglycerols. This Malassezia restricta (strain ATCC 96810 / NBRC 103918 / CBS 7877) (Seborrheic dermatitis infection agent) protein is Secreted mono- and diacylglycerol lipase LIP2.